A 934-amino-acid chain; its full sequence is Protocadherin gamma-C3 (934 aa).

An N-terminal signal peptide occupies residues 1 to 31; sequence MVPEAWRSGLVSTGRVVGVLLLLGALNKAST. Cadherin domains follow at residues 32 to 135, 136 to 244, 245 to 352, 353 to 457, 458 to 567, and 572 to 685; these read VIHY…NPAF, PTQE…APVF, NQSL…APEI, TVTS…PPQS, SQSS…APQV, and PGGS…APRE. Over 32–693 the chain is Extracellular; the sequence is VIHYEIPEER…REQKKNLTFY (662 aa). Residues N245, N424, N478, N550, N615, and N689 are each glycosylated (N-linked (GlcNAc...) asparagine). Residues 694–714 traverse the membrane as a helical segment; sequence LLLSLILVSVGFVVTVFGVII. Residues 715 to 934 lie on the Cytoplasmic side of the membrane; sequence FKVYKWKQSR…KKKSGKKEKK (220 aa). Disordered stretches follow at residues 804–843 and 904–934; these read ESAP…WPNN and ATLT…KEKK. Positions 812-843 are enriched in polar residues; that stretch reads APPNTDWRFSQAQRPGTSGSQNGDDTGTWPNN. Positions 924–934 are enriched in basic residues; that stretch reads NKKKSGKKEKK.

The protein resides in the cell membrane. Functionally, potential calcium-dependent cell-adhesion protein. May be involved in the establishment and maintenance of specific neuronal connections in the brain. This chain is Protocadherin gamma-C3 (PCDHGC3), found in Homo sapiens (Human).